We begin with the raw amino-acid sequence, 94 residues long: MNIKPLGDRVVIKRVEAEETTKSGIVLPGSAKEQPQLAEVMAVGPGGVIEGKEVVMEVKVGDKVIFSKYAGTEVKFDGVEYTILKQSDILAVVE.

It belongs to the GroES chaperonin family. As to quaternary structure, heptamer of 7 subunits arranged in a ring. Interacts with the chaperonin GroEL.

It is found in the cytoplasm. Its function is as follows. Together with the chaperonin GroEL, plays an essential role in assisting protein folding. The GroEL-GroES system forms a nano-cage that allows encapsulation of the non-native substrate proteins and provides a physical environment optimized to promote and accelerate protein folding. GroES binds to the apical surface of the GroEL ring, thereby capping the opening of the GroEL channel. This Alkaliphilus oremlandii (strain OhILAs) (Clostridium oremlandii (strain OhILAs)) protein is Co-chaperonin GroES.